A 353-amino-acid polypeptide reads, in one-letter code: MATVPSNPAFAPTLSTRGRLNGILFVALFAVAVTQLAAMPAIANLGISPLIVGIVAGALYGNALRDGVPASWAAGINFSARGLLRIAVAFFGLRVSLQEIAEVGWSGLIVSVLVVTSTLLIGLWCGMKVFKLDRDTALLTAAGSAICGAAAVLAFESALRSAPHKSAMAVGSVVLFGTLSMFLYPLAINAGWLHLDTMGAGLLLGGTVHEVAQVVGAASNVSPEATHVATIVKMTRVMLLVPVLLVVGLWISRSRKAGQAQGNGRIAMPWFAFGFLALVLVNSMQVLPGSVTQAVNSLDTFALTMAMTALGMETRFSQIRQAGPRALATGAILNLWLVGGGLAITLGVQKLLG.

The next 8 helical transmembrane spans lie at 20 to 42 (LNGI…MPAI), 70 to 92 (ASWA…AFFG), 105 to 127 (WSGL…WCGM), 137 to 159 (ALLT…ESAL), 166 to 188 (SAMA…PLAI), 234 to 253 (MTRV…WISR), 266 to 288 (IAMP…QVLP), and 326 to 348 (ALAT…TLGV).

It belongs to the UPF0324 family.

It is found in the cell membrane. The protein is UPF0324 membrane protein PP_3661 of Pseudomonas putida (strain ATCC 47054 / DSM 6125 / CFBP 8728 / NCIMB 11950 / KT2440).